The chain runs to 334 residues: GTP 3',8-cyclase (334 aa).

Residues 13–239 form the Radical SAM core domain; the sequence is RFHRKFYYLR…KVKAVNDGPA (227 aa). Arg22 lines the GTP pocket. Positions 29 and 33 each coordinate [4Fe-4S] cluster. S-adenosyl-L-methionine is bound at residue Tyr35. Cys36 contacts [4Fe-4S] cluster. Arg73 contributes to the GTP binding site. Gly77 is a binding site for S-adenosyl-L-methionine. Thr104 is a binding site for GTP. S-adenosyl-L-methionine is bound at residue Ser128. Residue Lys165 coordinates GTP. S-adenosyl-L-methionine is bound at residue Met199. 2 residues coordinate [4Fe-4S] cluster: Cys262 and Cys265. 267-269 is a GTP binding site; sequence RLR. Position 279 (Cys279) interacts with [4Fe-4S] cluster.

The protein belongs to the radical SAM superfamily. MoaA family. Monomer and homodimer. It depends on [4Fe-4S] cluster as a cofactor.

The enzyme catalyses GTP + AH2 + S-adenosyl-L-methionine = (8S)-3',8-cyclo-7,8-dihydroguanosine 5'-triphosphate + 5'-deoxyadenosine + L-methionine + A + H(+). The protein operates within cofactor biosynthesis; molybdopterin biosynthesis. Catalyzes the cyclization of GTP to (8S)-3',8-cyclo-7,8-dihydroguanosine 5'-triphosphate. The sequence is that of GTP 3',8-cyclase from Vibrio atlanticus (strain LGP32) (Vibrio splendidus (strain Mel32)).